Consider the following 252-residue polypeptide: Protein Flattop homolog (252 aa).

The interval 177–252 is disordered; sequence TEKRRRKRTI…EKERKAAKGH (76 aa). Residues 218–252 show a composition bias toward basic and acidic residues; that stretch reads PKDKPKDKPKDKEAGKKDKTKDKGKEKERKAAKGH.

This sequence belongs to the Flattop family.

The polypeptide is Protein Flattop homolog (Drosophila melanogaster (Fruit fly)).